Consider the following 471-residue polypeptide: Pneumolysin (471 aa).

4 beta stranded membrane passes run 158–171 (MEQLKVKFGSDFEK), 178–187 (IDFNSVHSGE), 256–265 (SDEVEAAFEA), and 273–285 (APQTEWKQILDNT). Positions 427–437 (ECTGLAWEWWR) match the Conserved undecapeptide motif. Residues 459–460 (TL) carry the Cholesterol binding motif.

The protein belongs to the cholesterol-dependent cytolysin family. As to quaternary structure, homooligomeric pore complex of 35 to 50 subunits; when inserted in the host membrane. Post-translationally, has a slightly altered apparent molecular weight in a secA2 deletion mutant, but no post-translational modifications have been found.

It localises to the secreted. It is found in the cell wall. The protein resides in the host cell membrane. In terms of biological role, a cholesterol-dependent toxin that causes cytolysis by forming pores in cholesterol containing host membranes. After binding to target membranes, the protein undergoes a major conformation change, leading to its insertion in the host membrane and formation of an oligomeric pore complex. Cholesterol is required for binding to host membranes, membrane insertion and pore formation; cholesterol binding is mediated by a Thr-Leu pair in the C-terminus. Can be reversibly inactivated by oxidation. This Streptococcus pneumoniae serotype 4 (strain ATCC BAA-334 / TIGR4) protein is Pneumolysin (ply).